We begin with the raw amino-acid sequence, 331 residues long: 6-phosphogluconolactonase (331 aa).

This sequence belongs to the cycloisomerase 2 family.

The catalysed reaction is 6-phospho-D-glucono-1,5-lactone + H2O = 6-phospho-D-gluconate + H(+). Its pathway is carbohydrate degradation; pentose phosphate pathway; D-ribulose 5-phosphate from D-glucose 6-phosphate (oxidative stage): step 2/3. Catalyzes the hydrolysis of 6-phosphogluconolactone to 6-phosphogluconate. The sequence is that of 6-phosphogluconolactonase from Salmonella agona (strain SL483).